Reading from the N-terminus, the 439-residue chain is Type 3 secretion system ATPase (439 aa).

172–177 contacts ATP; sequence GGGKST.

Belongs to the ATPase alpha/beta chains family. T3SS ATPase subfamily. As to quaternary structure, the core secretion machinery of the T3SS is composed of approximately 20 different proteins, including cytoplasmic components, a base, an export apparatus and a needle. This subunit is part of the cytosolic complex. Forms homohexamers.

The protein resides in the cytoplasm. It carries out the reaction ATP + H2O + cellular proteinSide 1 = ADP + phosphate + cellular proteinSide 2.. ATPase component of the type III secretion system (T3SS), also called injectisome, which is used to inject bacterial effector proteins into eukaryotic host cells. Acts as a molecular motor to provide the energy that is required for the export of proteins. Required for type III secretion apparatus (T3SA) formation, proper protein secretion, host cell invasion and virulence. May play a critical role in T3SS substrate recognition, disassembly of the effector/chaperone complex and unfolding of the effector in an ATP-dependent manner prior to secretion. The sequence is that of Type 3 secretion system ATPase from Yersinia pseudotuberculosis serotype I (strain IP32953).